Reading from the N-terminus, the 295-residue chain is Protease HtpX (295 aa).

2 helical membrane passes run 4 to 24 and 41 to 61; these read ILLF…TLSL and SSLL…SLFI. His-147 lines the Zn(2+) pocket. The active site involves Glu-148. Residue His-151 coordinates Zn(2+). 2 helical membrane-spanning segments follow: residues 158 to 178 and 199 to 219; these read VTLA…ARII and VATI…VMWF. Glu-224 is a Zn(2+) binding site.

This sequence belongs to the peptidase M48B family. Zn(2+) is required as a cofactor.

Its subcellular location is the cell inner membrane. This is Protease HtpX from Pseudomonas putida (strain W619).